Consider the following 373-residue polypeptide: ATP synthase gamma chain 1, chloroplastic (373 aa).

The transit peptide at 1–50 (MACSNLTTMWVSSKPSLSADSSSLSFRSVLKCPTNTSSPPSRASSVSPLQ) directs the protein to the chloroplast. The active site involves Cys139. Cys249 and Cys255 are oxidised to a cystine. Phosphoserine is present on Ser347.

It belongs to the ATPase gamma chain family. F-type ATPases have 2 components, CF(1) - the catalytic core - and CF(0) - the membrane proton channel. CF(1) has five subunits: alpha(3), beta(3), gamma(1), delta(1), epsilon(1). CF(0) has four main subunits: a, b, b' and c. Interacts with PAB.

Its subcellular location is the plastid. The protein localises to the chloroplast thylakoid membrane. Produces ATP from ADP in the presence of a proton gradient across the membrane. The gamma chain is believed to be important in regulating ATPase activity and the flow of protons through the CF(0) complex. The chain is ATP synthase gamma chain 1, chloroplastic (ATPC1) from Arabidopsis thaliana (Mouse-ear cress).